The sequence spans 4118 residues: BEACH domain-containing protein lvsB (4118 aa).

Positions 1 to 35 (MNRNFNNINNNNNNNNNYHGYQYHQQQQQQNQQQQ) are disordered. A helical membrane pass occupies residues 198–218 (GIPLSFLNFLITILLRILSLP). A compositionally biased stretch (low complexity) spans 236–257 (NFSGNNNNNFNNNNHYFNNNHN). Disordered regions lie at residues 236–267 (NFSGNNNNNFNNNNHYFNNNHNNHNHHYQHHQ), 332–382 (PLSS…SKNN), and 621–644 (ISSSDNNNNNNNNSDGVNDDKNNN). The span at 258–267 (NHNHHYQHHQ) shows a compositional bias: basic residues. 2 stretches are compositionally biased toward low complexity: residues 332-381 (PLSS…NSKN) and 621-636 (ISSSDNNNNNNNNSDG). The helical transmembrane segment at 827–847 (YLVLYMIVTEILSLLLELLVP) threads the bilayer. The span at 1155-1170 (NGGSISPSSIINNMNS) shows a compositional bias: low complexity. 11 disordered regions span residues 1155-1213 (NGGS…FNNN), 1599-1622 (ANTTTNSTTASTTTTTTNSTTAVS), 1643-1681 (NSGISRENSLGGRDSIGSNSSSSSSSSNSGVSSGSSTNL), 1928-1968 (GNFL…ISSS), 2015-2044 (STNNNSNNSNNSNSNNNNNNNNTNYNSNSL), 2537-2574 (RRGSSSSSTNSTTNNNNNNSSTTTTSNNNNNNNENNNE), 2702-2741 (FSPSRSKEKEKEKEKEKEKEKEKEKERERERETTNVTSDS), 2754-2791 (DQSNEESSTTDSDSTSDNNNNNNRNSYSGRNIRGNGIN), 2902-3007 (NTNS…NSNE), 3245-3265 (PLIPDLSTPSTPPSPQNTKDQ), and 3348-3418 (KTTA…NIVK). 2 stretches are compositionally biased toward low complexity: residues 1657–1678 (SIGSNSSSSSSSSNSGVSSGSS) and 1935–1968 (SSSNNNLRERSINNNNNNNNNSNNNNNNNSISSS). Low complexity predominate over residues 2540-2571 (SSSSSTNSTTNNNNNNSSTTTTSNNNNNNNEN). Residues 2705 to 2738 (SRSKEKEKEKEKEKEKEKEKEKERERERETTNVT) adopt a coiled-coil conformation. A compositionally biased stretch (basic and acidic residues) spans 2706–2734 (RSKEKEKEKEKEKEKEKEKEKERERERET). Composition is skewed to low complexity over residues 2758–2791 (EESSTTDSDSTSDNNNNNNRNSYSGRNIRGNGIN) and 2902–2947 (NTNS…NSTN). The span at 2948-2962 (QTITDTTLSPASSNV) shows a compositional bias: polar residues. 2 stretches are compositionally biased toward low complexity: residues 2963-2980 (SISNQSTPISNNNNNNNS) and 2988-3006 (SNINIPPTINISDSNSNSN). The BEACH-type PH domain occupies 3303-3479 (KLGEKVNEVF…DRDIVYDLIM (177 aa)). Positions 3357 to 3411 (SNNNNNNNNNNNNNNNNNNNNSNDTTSSINSTTATNTNTTNTTTTNTTTTTTTTN) are enriched in low complexity. The BEACH domain occupies 3491–3782 (AEVHGNILKM…QIFTKPHPKK (292 aa)). 5 WD repeats span residues 3868 to 3907 (VLNDDIICGDITKNGRLFVTGGTAGTVKVWKRCNNDGTIM), 3924 to 3963 (GHTNSILCVTVSQEYSIIVSGSKDSNCIIWDLNRLTYINS), 3984 to 4027 (TFET…LAKQ), 4029 to 4073 (FVND…KIRT), and 4075 to 4114 (VSKSTITALAVSKDNTQLISGDINGLIECLSSRSFDGYSS).

It localises to the membrane. The protein localises to the lysosome. The protein resides in the endosome. Functionally, involved in negative regulation of lysosome biogenesis, by limiting the heterotypic fusion of early endosomes and postlysosomal compartments. In Dictyostelium discoideum (Social amoeba), this protein is BEACH domain-containing protein lvsB (lvsB).